Here is a 145-residue protein sequence, read N- to C-terminus: Arginine repressor (145 aa).

This sequence belongs to the ArgR family.

It localises to the cytoplasm. The protein operates within amino-acid biosynthesis; L-arginine biosynthesis [regulation]. In terms of biological role, regulates arginine biosynthesis genes. The polypeptide is Arginine repressor (Streptococcus equi subsp. zooepidemicus (strain H70)).